The sequence spans 289 residues: Probable acetolactate synthase small subunit (289 aa).

Phosphoserine is present on serine 34. An ACT domain is found at valine 72–methionine 149.

Belongs to the acetolactate synthase small subunit family.

The protein resides in the cytoplasm. The protein operates within amino-acid biosynthesis; L-isoleucine biosynthesis; L-isoleucine from 2-oxobutanoate: step 1/4. Its pathway is amino-acid biosynthesis; L-valine biosynthesis; L-valine from pyruvate: step 1/4. Its function is as follows. Stimulates activity of the acetolactate synthase catalytic subunit ilv1. This chain is Probable acetolactate synthase small subunit, found in Schizosaccharomyces pombe (strain 972 / ATCC 24843) (Fission yeast).